The sequence spans 304 residues: Aspartate carbamoyltransferase catalytic subunit (304 aa).

Residues Arg-49 and Thr-50 each contribute to the carbamoyl phosphate site. Lys-77 provides a ligand contact to L-aspartate. Carbamoyl phosphate is bound by residues Arg-99, His-127, and Gln-130. The L-aspartate site is built by Arg-160 and Arg-211. Positions 252 and 253 each coordinate carbamoyl phosphate.

Belongs to the aspartate/ornithine carbamoyltransferase superfamily. ATCase family. Heterododecamer (2C3:3R2) of six catalytic PyrB chains organized as two trimers (C3), and six regulatory PyrI chains organized as three dimers (R2).

The enzyme catalyses carbamoyl phosphate + L-aspartate = N-carbamoyl-L-aspartate + phosphate + H(+). The protein operates within pyrimidine metabolism; UMP biosynthesis via de novo pathway; (S)-dihydroorotate from bicarbonate: step 2/3. Catalyzes the condensation of carbamoyl phosphate and aspartate to form carbamoyl aspartate and inorganic phosphate, the committed step in the de novo pyrimidine nucleotide biosynthesis pathway. The chain is Aspartate carbamoyltransferase catalytic subunit from Bacillus cereus (strain ATCC 10987 / NRS 248).